The chain runs to 49 residues: Large ribosomal subunit protein bL33 (49 aa).

This sequence belongs to the bacterial ribosomal protein bL33 family.

This chain is Large ribosomal subunit protein bL33, found in Clostridium botulinum (strain Alaska E43 / Type E3).